Here is a 465-residue protein sequence, read N- to C-terminus: Gamma-aminobutyric acid receptor subunit rho-2 (465 aa).

The signal sequence occupies residues 1-20 (MPYFSRLILFLFCLVVLVES). At 21–260 (RKPKKRRWTG…LYINFTLRRH (240 aa)) the chain is on the extracellular side. Arg105 contributes to the 4-aminobutanoate binding site. An N-linked (GlcNAc...) asparagine glycan is attached at Asn120. Ser169 is a 4-aminobutanoate binding site. Cys178 and Cys192 are oxidised to a cystine. 4-aminobutanoate is bound at residue Glu197. Asn254 is a glycosylation site (N-linked (GlcNAc...) asparagine). Residues 261-281 (IFFFLLQTYFPATLMVMLSWV) form a helical membrane-spanning segment. The Cytoplasmic portion of the chain corresponds to 282–293 (SFWIDRRAVPAR). Residues 294-314 (VSLGITTVLTMSTIITGVNAS) form a helical membrane-spanning segment. At 315–325 (MPRVSYIKAVD) the chain is on the extracellular side. A helical membrane pass occupies residues 326 to 346 (IYLWVSFVFVFLSVLEYAAVN). At 347-444 (YLTTVQERKE…FQNTHAIDKY (98 aa)) the chain is on the cytoplasmic side. A helical transmembrane segment spans residues 445 to 465 (SRLIFPASYIFFNLIYWSVFA).

The protein belongs to the ligand-gated ion channel (TC 1.A.9) family. Gamma-aminobutyric acid receptor (TC 1.A.9.5) subfamily. GABRR2 sub-subfamily. In terms of assembly, three rho subunits (rho-1/GBRR1, rho-2/GBRR2 and rho-3/GBRR3) coassemble either to form functional homopentamers or heteropentamers. Rho-2 is unable to form a functional homopentamer. Interacts with SQSTM1.

The protein resides in the postsynaptic cell membrane. It localises to the cell membrane. It carries out the reaction chloride(in) = chloride(out). Rho subunit of the pentameric ligand-gated chloride channels responsible for mediating the effects of gamma-aminobutyric acid (GABA), the major inhibitory neurotransmitter in the brain. Rho-containing GABA-gated chloride channels are a subclass of GABA(A) receptors (GABAARs) entirely composed of rho subunits, where GABA molecules bind at the rho intersubunit interfaces. When activated by GABA, rho-GABAARs selectively allow the flow of chloride anions across the cell membrane down their electrochemical gradient. Rho-2 GABAARs may contribute to the regulation of glial development in the cerebellum by controlling extrasynaptic transmission. Rho-2 GABAARs are also involved in neuronal tonic (extrasynaptic) and phasic (synaptic) transmission in the Purkinje neurons of the cerebellum. Rho-2 GABAARs expressed in retina may play a role in retinal neurotransmission. In Bos taurus (Bovine), this protein is Gamma-aminobutyric acid receptor subunit rho-2 (GABRR2).